Here is a 533-residue protein sequence, read N- to C-terminus: MKGILGLSLLPLLTAASPVFVDSIHNEAAPILSATNAKEVPDSYIVVFKKHVTSELASAHHSWVQDIHDSQSERTELKKRSLFGLGDEVYLGLKNTFDIAGSLIGYSGHFHEDVIEQVRRHPDVDYIERDSEVHTMEGATEKNAPWGLARISHRDSLTFGNFNKYLYASEGGEGVDAYTIDTGINVDHVDFEGRATWGKTIPTNDEDLDGNGHGTHCSGTMAGKKYGVAKKANLYAVKVLRSSGSGTMSDVVSGVEYAVQAHIKKAKDAKNGKVKGFKGSVANMSLGGGKSKTLEDAVNAGVEAGLHFAVAAGNDNADACNYSPAAAEKAITVGASTLADERAYFSNYGECTDIFAPGLNILSTWIGSNYATNIISGTSMASPHIAGLLAYFVSLQPSSDSAFAVEELTPAKLKKDIIAIATEGALTDIPSNTPNVSHAAVGIYKRNELTQKFSSLPGTVVVPRTTPTSLAAVATRSPLPRTASRTVLRVSFTRPKSCSPRSLVPSTARSRMPSSHRSELVLSRRRSEDLVFF.

The N-terminal stretch at M1 to A16 is a signal peptide. Residues S43–M136 enclose the Inhibitor I9 domain. The Peptidase S8 domain occupies P145–T450. Residues D181 and H213 each act as charge relay system in the active site. The N-linked (GlcNAc...) asparagine glycan is linked to N283. The cysteines at positions 320 and 351 are disulfide-linked. S379 (charge relay system) is an active-site residue. N435 carries an N-linked (GlcNAc...) asparagine glycan. The span at K496–P513 shows a compositional bias: polar residues. Residues K496–E519 are disordered.

The protein belongs to the peptidase S8 family.

The polypeptide is Subtilisin-like serine protease pepC (pepC) (Aspergillus niger).